The sequence spans 143 residues: MNLNTKYHGNIEYEEKDVIYFPKGIPGFEELKRFIIFPVEDNEVFLVFHSIENEDIGIIITSPFNIEKDYEIQLEEEQITNLKIQDEKDALVLNTVTLSSDIDKITVNLRAPIIINIKEKIGEQIIINSDRYKVKHPLFKEEA.

It belongs to the FliW family. In terms of assembly, interacts with translational regulator CsrA and flagellin(s).

The protein resides in the cytoplasm. Acts as an anti-CsrA protein, binds CsrA and prevents it from repressing translation of its target genes, one of which is flagellin. Binds to flagellin and participates in the assembly of the flagellum. This is Flagellar assembly factor FliW from Clostridium botulinum (strain Langeland / NCTC 10281 / Type F).